A 355-amino-acid chain; its full sequence is Phosphate acyltransferase (355 aa).

The protein belongs to the PlsX family. In terms of assembly, homodimer. Probably interacts with PlsY.

Its subcellular location is the cytoplasm. The enzyme catalyses a fatty acyl-[ACP] + phosphate = an acyl phosphate + holo-[ACP]. It functions in the pathway lipid metabolism; phospholipid metabolism. Its function is as follows. Catalyzes the reversible formation of acyl-phosphate (acyl-PO(4)) from acyl-[acyl-carrier-protein] (acyl-ACP). This enzyme utilizes acyl-ACP as fatty acyl donor, but not acyl-CoA. The sequence is that of Phosphate acyltransferase from Rhodospirillum centenum (strain ATCC 51521 / SW).